Consider the following 344-residue polypeptide: Methionine import ATP-binding protein MetN (344 aa).

Positions 2-241 constitute an ABC transporter domain; it reads LELKQVGKVY…PQAEVTKAFV (240 aa). An ATP-binding site is contributed by 38–45; sequence GYSGAGKS.

This sequence belongs to the ABC transporter superfamily. Methionine importer (TC 3.A.1.24) family. The complex is composed of two ATP-binding proteins (MetN), two transmembrane proteins (MetI) and a solute-binding protein (MetQ).

The protein resides in the cell membrane. The enzyme catalyses L-methionine(out) + ATP + H2O = L-methionine(in) + ADP + phosphate + H(+). The catalysed reaction is D-methionine(out) + ATP + H2O = D-methionine(in) + ADP + phosphate + H(+). Functionally, part of the ABC transporter complex MetNIQ involved in methionine import. Responsible for energy coupling to the transport system. This is Methionine import ATP-binding protein MetN from Latilactobacillus sakei subsp. sakei (strain 23K) (Lactobacillus sakei subsp. sakei).